We begin with the raw amino-acid sequence, 1068 residues long: WD repeat-containing protein on Y chromosome (1068 aa).

WD repeat units follow at residues 155 to 199, 201 to 242, 322 to 361, 365 to 404, 455 to 494, 507 to 546, and 594 to 634; these read DEVT…IRTA, SESI…RGPF, RIPLGVSTFFVAESHNIVVTGGPDTFVRIWDVYIPTEPSA, GHNGGIVLVFVQPEENKVYSVDYQKIIKVWDLHEHTLLQT, THAAPVSVVLYNRLFRNVVSCGLDSYIIVWDPWTGRRKII, IIDIEITAACFDPLEQFLLTGARDGSLKIWNYNNAVVVRN, and FHTD…RRYS. The segment at 657–687 is disordered; sequence SKRLASRPTPGNHGLQMGRAGRSTVLNRPED. WD repeat units lie at residues 746–785 and 829–868; these read KTGDCVLTMCTDRKNRYLYTGTAFGYIKVWHIENFCVPET and GHLKAINSISFINLPKIIFTGSHDYSCRLWTQGGRYLGTL. The disordered stretch occupies residues 1026-1068; sequence SAINIKQPSRRRSDKTNDTRNVRTPRARDLIALEMSSSHASQS. Positions 1039–1056 are enriched in basic and acidic residues; it reads DKTNDTRNVRTPRARDLI.

The polypeptide is WD repeat-containing protein on Y chromosome (Drosophila yakuba (Fruit fly)).